Reading from the N-terminus, the 430-residue chain is Tol-Pal system protein TolB (430 aa).

A signal peptide spans 1–21; sequence MKQALRVAFGFLILWASVLHA.

It belongs to the TolB family. The Tol-Pal system is composed of five core proteins: the inner membrane proteins TolA, TolQ and TolR, the periplasmic protein TolB and the outer membrane protein Pal. They form a network linking the inner and outer membranes and the peptidoglycan layer.

It localises to the periplasm. Functionally, part of the Tol-Pal system, which plays a role in outer membrane invagination during cell division and is important for maintaining outer membrane integrity. TolB occupies a key intermediary position in the Tol-Pal system because it communicates directly with both membrane-embedded components, Pal in the outer membrane and TolA in the inner membrane. This Shigella dysenteriae serotype 1 (strain Sd197) protein is Tol-Pal system protein TolB.